Consider the following 303-residue polypeptide: Mycothiol acetyltransferase (303 aa).

2 consecutive N-acetyltransferase domains span residues 4–141 and 154–303; these read ITVR…RSLA and IVLR…ANGA. E38 is a 1D-myo-inositol 2-(L-cysteinylamino)-2-deoxy-alpha-D-glucopyranoside binding site. Residue 80–82 participates in acetyl-CoA binding; that stretch reads AAV. E181, K223, and E234 together coordinate 1D-myo-inositol 2-(L-cysteinylamino)-2-deoxy-alpha-D-glucopyranoside. Acetyl-CoA-binding positions include 238–240 and 245–251; these read VGI and QGRGLGR. Y272 contacts 1D-myo-inositol 2-(L-cysteinylamino)-2-deoxy-alpha-D-glucopyranoside. 277-282 contacts acetyl-CoA; that stretch reads NTAAVN.

The protein belongs to the acetyltransferase family. MshD subfamily. Monomer.

The enzyme catalyses 1D-myo-inositol 2-(L-cysteinylamino)-2-deoxy-alpha-D-glucopyranoside + acetyl-CoA = mycothiol + CoA + H(+). In terms of biological role, catalyzes the transfer of acetyl from acetyl-CoA to desacetylmycothiol (Cys-GlcN-Ins) to form mycothiol. In Nocardia farcinica (strain IFM 10152), this protein is Mycothiol acetyltransferase.